A 352-amino-acid polypeptide reads, in one-letter code: DNA integrity scanning protein DisA (352 aa).

Positions 3 to 143 (DERIVLALKS…FKYSLSEVSV (141 aa)) constitute a DAC domain. ATP is bound by residues Gly70, Leu88, and 101 to 105 (IRHRT).

This sequence belongs to the DisA family. In terms of assembly, homooctamer. Mg(2+) is required as a cofactor.

It catalyses the reaction 2 ATP = 3',3'-c-di-AMP + 2 diphosphate. Functionally, participates in a DNA-damage check-point that is active prior to asymmetric division when DNA is damaged. DisA forms globular foci that rapidly scan along the chromosomes during sporulation, searching for lesions. When a lesion is present, DisA pauses at the lesion site. This triggers a cellular response that culminates in a temporary block in sporulation initiation. Also has diadenylate cyclase activity, catalyzing the condensation of 2 ATP molecules into cyclic di-AMP (c-di-AMP). c-di-AMP acts as a signaling molecule that couples DNA integrity with progression of sporulation. The rise in c-di-AMP level generated by DisA while scanning the chromosome, operates as a positive signal that advances sporulation; upon encountering a lesion, the DisA focus arrests at the damaged site and halts c-di-AMP synthesis. This Carboxydothermus hydrogenoformans (strain ATCC BAA-161 / DSM 6008 / Z-2901) protein is DNA integrity scanning protein DisA.